The primary structure comprises 1468 residues: Neuropathy target esterase sws (1468 aa).

Residues 1-34 are Lumenal-facing; it reads MDVLEMLRASASGSYNTIFSDAWCQYVSKQITAT. A helical transmembrane segment spans residues 35–55; that stretch reads VYMYCALVMMSLLFIAWFLYF. Topologically, residues 56 to 1468 are cytoplasmic; the sequence is KRMARLRLRD…RSSPNNETKN (1413 aa). 174–301 lines the a nucleoside 3',5'-cyclic phosphate pocket; it reads IFGHFEKPVF…IRVIQVIMIR (128 aa). Polar residues-rich tracts occupy residues 332-348 and 357-366; these read TMSGPINSQTSQSSRQA and NQLNLMQSAA. Residues 332–411 form a disordered region; it reads TMSGPINSQT…DGSFHGTTNL (80 aa). S442 and S451 each carry phosphoserine. A nucleoside 3',5'-cyclic phosphate contacts are provided by residues 480-607 and 596-723; these read ELGL…VVRR and IVLD…LSHR. A PNPLA domain is found at 950–1116; the sequence is LVLGGGGARG…VNNLPGHLWR (167 aa). The GXGXXG signature appears at 954–959; it reads GGGARG. The GXSXG signature appears at 981–985; sequence GVSIG. Catalysis depends on S983, which acts as the Nucleophile. The Proton acceptor role is filled by D1103. The short motif at 1103–1105 is the DGA/G element; it reads DGG. S1197 carries the phosphoserine modification. Residues 1368–1468 form a disordered region; the sequence is ERKMDKSTQS…RSSPNNETKN (101 aa). Low complexity predominate over residues 1374-1383; it reads STQSSPPTSS. The span at 1385 to 1395 shows a compositional bias: basic and acidic residues; that stretch reads TDMRGKEEAKH. Residues 1419 to 1441 are compositionally biased toward low complexity; that stretch reads TQTGQEQELQQQQKLQQLQQDQG. Basic and acidic residues predominate over residues 1446–1459; it reads QLVDKDKEEDKENR.

This sequence belongs to the NTE family. In terms of assembly, interacts with Pka-C3; interaction inhibits the catalytic function of Pka-C3 and the esterase activity of sws.

The protein localises to the endoplasmic reticulum membrane. The catalysed reaction is a 1-acyl-sn-glycero-3-phosphocholine + H2O = sn-glycerol 3-phosphocholine + a fatty acid + H(+). Functionally, phospholipase B that deacylates intracellular phosphatidylcholine (PtdCho), generating glycerophosphocholine (GroPtdCho). This deacylation occurs at both sn-2 and sn-1 positions of PtdCho. Its specific chemical modification by certain organophosphorus (OP) compounds leads to distal axonopathy. Plays a role in the signaling mechanism between neurons and glia that regulates glia wrapping during development of the adult brain. Essential for membrane lipid homeostasis and cell survival in both neurons and glia of the adult brain. In Drosophila sechellia (Fruit fly), this protein is Neuropathy target esterase sws.